Consider the following 155-residue polypeptide: SsrA-binding protein (155 aa).

It belongs to the SmpB family.

The protein localises to the cytoplasm. In terms of biological role, required for rescue of stalled ribosomes mediated by trans-translation. Binds to transfer-messenger RNA (tmRNA), required for stable association of tmRNA with ribosomes. tmRNA and SmpB together mimic tRNA shape, replacing the anticodon stem-loop with SmpB. tmRNA is encoded by the ssrA gene; the 2 termini fold to resemble tRNA(Ala) and it encodes a 'tag peptide', a short internal open reading frame. During trans-translation Ala-aminoacylated tmRNA acts like a tRNA, entering the A-site of stalled ribosomes, displacing the stalled mRNA. The ribosome then switches to translate the ORF on the tmRNA; the nascent peptide is terminated with the 'tag peptide' encoded by the tmRNA and targeted for degradation. The ribosome is freed to recommence translation, which seems to be the essential function of trans-translation. The polypeptide is SsrA-binding protein (Streptococcus pneumoniae (strain 70585)).